We begin with the raw amino-acid sequence, 514 residues long: Ribonuclease Y (514 aa).

A helical membrane pass occupies residues 3–23 (VLWMVLGLAIGIAVGAAAGYI). In terms of domain architecture, KH spans 203–266 (TVKAVELPSD…EVARIAMERL (64 aa)). The HD domain maps to 330–423 (VLAHSVEVAN…VATADAVSAA (94 aa)).

Belongs to the RNase Y family.

It is found in the cell membrane. Functionally, endoribonuclease that initiates mRNA decay. The chain is Ribonuclease Y from Rubrobacter xylanophilus (strain DSM 9941 / JCM 11954 / NBRC 16129 / PRD-1).